The primary structure comprises 395 residues: Syncephapepsin (395 aa).

The first 19 residues, 1–19 (MKFSLALLATVALATISQA), serve as a signal peptide directing secretion. Positions 20-71 (APVEKQVAGKPFQLVKNPHYQANATRAIFRAEKKYARHTAIPEQGKTIVKSA) are cleaved as a propeptide — activation peptide. The 303-residue stretch at 89–391 (YYATVSVGTP…NQGVPEVQIA (303 aa)) folds into the Peptidase A1 domain. D107 is a catalytic residue. An intrachain disulfide couples C120 to C123. D288 is a catalytic residue. A disulfide bond links C322 and C355.

It belongs to the peptidase A1 family. Monomer.

Hydrolysis of proteins with a broad specificity. Residues recognized to be cleaved were primarily those of trypsin and chymotrypsin and Lys was the most susceptible. This chain is Syncephapepsin (SPSR), found in Syncephalastrum racemosum (Filamentous fungus).